Consider the following 131-residue polypeptide: uncharacterized protein (131 aa).

Residues 13 to 32 (TYSPLPEPPPTPALGGQRGP) form a disordered region.

This is an uncharacterized protein from Homo sapiens (Human).